The following is an 883-amino-acid chain: Phosphoenolpyruvate carboxylase (883 aa).

Active-site residues include H138 and K546.

It belongs to the PEPCase type 1 family. Mg(2+) serves as cofactor.

The enzyme catalyses oxaloacetate + phosphate = phosphoenolpyruvate + hydrogencarbonate. Functionally, forms oxaloacetate, a four-carbon dicarboxylic acid source for the tricarboxylic acid cycle. The protein is Phosphoenolpyruvate carboxylase of Klebsiella pneumoniae (strain 342).